The chain runs to 212 residues: Protein-L-isoaspartate O-methyltransferase (212 aa).

The active site involves Ser60.

Belongs to the methyltransferase superfamily. L-isoaspartyl/D-aspartyl protein methyltransferase family.

Its subcellular location is the cytoplasm. The enzyme catalyses [protein]-L-isoaspartate + S-adenosyl-L-methionine = [protein]-L-isoaspartate alpha-methyl ester + S-adenosyl-L-homocysteine. Functionally, catalyzes the methyl esterification of L-isoaspartyl residues in peptides and proteins that result from spontaneous decomposition of normal L-aspartyl and L-asparaginyl residues. It plays a role in the repair and/or degradation of damaged proteins. The sequence is that of Protein-L-isoaspartate O-methyltransferase from Methylorubrum populi (strain ATCC BAA-705 / NCIMB 13946 / BJ001) (Methylobacterium populi).